Here is a 149-residue protein sequence, read N- to C-terminus: Large ribosomal subunit protein bL9 (149 aa).

This sequence belongs to the bacterial ribosomal protein bL9 family.

Functionally, binds to the 23S rRNA. This is Large ribosomal subunit protein bL9 from Bacillus velezensis (strain DSM 23117 / BGSC 10A6 / LMG 26770 / FZB42) (Bacillus amyloliquefaciens subsp. plantarum).